Reading from the N-terminus, the 235-residue chain is Urease accessory protein UreF (235 aa).

Belongs to the UreF family. In terms of assembly, ureD, UreF and UreG form a complex that acts as a GTP-hydrolysis-dependent molecular chaperone, activating the urease apoprotein by helping to assemble the nickel containing metallocenter of UreC. The UreE protein probably delivers the nickel.

Its subcellular location is the cytoplasm. Functionally, required for maturation of urease via the functional incorporation of the urease nickel metallocenter. The chain is Urease accessory protein UreF from Ureaplasma urealyticum serovar 10 (strain ATCC 33699 / Western).